The primary structure comprises 177 residues: Putative adenylate kinase (177 aa).

5 residues coordinate ATP: Gly10, Gly12, Lys13, Thr14, and Thr15. An NMP region spans residues 30–53 (DITEAVKKYKLYTEKDEDMDSYVI). The segment at 103-113 (KRGYKPKKVLE) is LID. Residue Arg104 coordinates ATP.

This sequence belongs to the adenylate kinase family. AK6 subfamily. Interacts with uS11. Not a structural component of 40S pre-ribosomes, but transiently interacts with them by binding to uS11.

It catalyses the reaction AMP + ATP = 2 ADP. The enzyme catalyses ATP + H2O = ADP + phosphate + H(+). Functionally, broad-specificity nucleoside monophosphate (NMP) kinase that catalyzes the reversible transfer of the terminal phosphate group between nucleoside triphosphates and monophosphates. Also has ATPase activity. Involved in the late maturation steps of the 30S ribosomal particles, specifically 16S rRNA maturation. While NMP activity is not required for ribosome maturation, ATPase activity is. Associates transiently with small ribosomal subunit protein uS11. ATP hydrolysis breaks the interaction with uS11. May temporarily remove uS11 from the ribosome to enable a conformational change of the ribosomal RNA that is needed for the final maturation step of the small ribosomal subunit. This Methanocaldococcus jannaschii (strain ATCC 43067 / DSM 2661 / JAL-1 / JCM 10045 / NBRC 100440) (Methanococcus jannaschii) protein is Putative adenylate kinase.